Reading from the N-terminus, the 199-residue chain is MFSIPPSVRRLVFLFLIAAPLLSIVLPVAAAPAGVDPPSKLQPRAPQPSRRMGATKRSKKIEPLKKKDYSSFLCPGGSVACPIPGDEVSPSSVEALEKSLNSLADWFKVGFECVELETELNSCGGCLALGSGQDCALIENARTTGCENGSCQVYSCFDGYVVSPDRTSCVKRGSTIPATPVTAVNVEEFVADDQLPFGQ.

The first 30 residues, 1–30 (MFSIPPSVRRLVFLFLIAAPLLSIVLPVAA), serve as a signal peptide directing secretion. Positions 34–58 (GVDPPSKLQPRAPQPSRRMGATKRS) are disordered. An N-linked (GlcNAc...) asparagine glycan is attached at N148.

It localises to the secreted. Its function is as follows. Virulence factor which promotes fungal virulence by enhancing type 2 inflammation in the mouse host. Likely binds mouse Tlr4 independently of Ly96/Md2 and activates Tlr4 signaling to drive Stat3 phosphorylation in interstitial macrophages, which promotes the initial induction of Arg1/arginase-1 and increases macrophage sensitivity to Il4 signaling. This is Protein CPL1 from Cryptococcus neoformans var. grubii serotype A (strain H99 / ATCC 208821 / CBS 10515 / FGSC 9487) (Filobasidiella neoformans var. grubii).